Reading from the N-terminus, the 146-residue chain is Hemoglobin subunit beta (146 aa).

Val1 bears the N-acetylvaline mark. A Globin domain is found at 2 to 146 (HLTPEEKNAV…VANALAHKYH (145 aa)). A Phosphothreonine modification is found at Thr12. Ser44 carries the post-translational modification Phosphoserine. Lys59 carries the post-translational modification N6-acetyllysine. His63 is a heme b binding site. Lys82 is subject to N6-acetyllysine. Residue His92 coordinates heme b. Cys93 carries the S-nitrosocysteine modification. The residue at position 144 (Lys144) is an N6-acetyllysine.

It belongs to the globin family. As to quaternary structure, heterotetramer of two alpha chains and two beta chains. In terms of tissue distribution, red blood cells.

Its function is as follows. Involved in oxygen transport from the lung to the various peripheral tissues. This chain is Hemoglobin subunit beta (HBB), found in Macaca mulatta (Rhesus macaque).